Consider the following 689-residue polypeptide: Long-chain fatty acid transport protein 5 (689 aa).

At M1–A29 the chain is on the cytoplasmic side. Helical transmembrane passes span L30–L50 and I55–L75. Residues P76–L689 lie on the Cytoplasmic side of the membrane. Residue I292–P303 participates in AMP binding.

It belongs to the ATP-dependent AMP-binding enzyme family. As to expression, liver-specific (at protein level). In liver expressed in a periportal distribution.

Its subcellular location is the endoplasmic reticulum membrane. It is found in the microsome. The protein localises to the cell membrane. The catalysed reaction is a fatty acid(in) = a fatty acid(out). It catalyses the reaction cholate + ATP + CoA = choloyl-CoA + AMP + diphosphate. The enzyme catalyses (25R)-3alpha,7alpha,12alpha-trihydroxy-5beta-cholestan-26-oate + ATP + CoA = (25R)-3alpha,7alpha,12alpha-trihydroxy-5beta-cholestan-26-oyl-CoA + AMP + diphosphate. It carries out the reaction chenodeoxycholate + ATP + CoA = chenodeoxycholoyl-CoA + AMP + diphosphate. The catalysed reaction is deoxycholate + ATP + CoA = deoxycholoyl-CoA + AMP + diphosphate. It catalyses the reaction lithocholate + ATP + CoA = lithocholoyl-CoA + AMP + diphosphate. The enzyme catalyses a very long-chain fatty acid + ATP + CoA = a very long-chain fatty acyl-CoA + AMP + diphosphate. It carries out the reaction tetracosanoate + ATP + CoA = tetracosanoyl-CoA + AMP + diphosphate. The catalysed reaction is hexacosanoate + ATP + CoA = hexacosanoyl-CoA + AMP + diphosphate. It catalyses the reaction a long-chain fatty acid + ATP + CoA = a long-chain fatty acyl-CoA + AMP + diphosphate. The enzyme catalyses octadecanoate + ATP + CoA = octadecanoyl-CoA + AMP + diphosphate. It carries out the reaction eicosanoate + ATP + CoA = eicosanoyl-CoA + AMP + diphosphate. In terms of biological role, mediates the import of long-chain fatty acids (LCFA) by facilitating their transport across cell membranes. Also catalyzes the ATP-dependent formation of fatty acyl-CoA using LCFA and very-long-chain fatty acids (VLCFA) as substrates. Mainly functions as a bile acyl-CoA synthetase catalyzing the activation of bile acids via ATP-dependent formation of bile acid CoA thioesters which is necessary for their subsequent conjugation with glycine or taurine. Both primary bile acids (cholic acid and chenodeoxycholic acid) and secondary bile acids (deoxycholic acid and lithocholic acid) are the principal substrates. In vitro, activates 3-alpha,7-alpha,12-alpha-trihydroxy-5-beta-cholestanate ((25R)-3alpha,7alpha,12alpha-trihydroxy-5beta-cholestan-26-oate or THCA), the C27 precursor of cholic acid deriving from the de novo synthesis from cholesterol. Plays an important role in hepatic fatty acid uptake and bile acid reconjugation and recycling but not in de novo synthesis of bile acids. The sequence is that of Long-chain fatty acid transport protein 5 (Slc27a5) from Mus musculus (Mouse).